Here is a 377-residue protein sequence, read N- to C-terminus: Phosphatidylserine decarboxylase proenzyme, mitochondrial (377 aa).

Residues 1 to 34 constitute a mitochondrion transit peptide; that stretch reads MMPLFNVLRSARMLPAVSKKVVSPPMMLRSVREL. Over 35-61 the chain is Mitochondrial matrix; sequence TNQSKNVYATKEVIIGASQKKKRSWVK. A helical transmembrane segment spans residues 62-80; that stretch reads WLSVSTLIIGGASYVGYLF. Over 81 to 377 the chain is Mitochondrial intermembrane; sequence TPDWREIVDS…YGQSLVADGV (297 aa). Catalysis depends on charge relay system; for autoendoproteolytic cleavage activity residues D181, H238, and S344. S344 acts as the Schiff-base intermediate with substrate; via pyruvic acid; for decarboxylase activity in catalysis. Pyruvic acid (Ser); by autocatalysis is present on S344.

This sequence belongs to the phosphatidylserine decarboxylase family. PSD-B subfamily. Eukaryotic type I sub-subfamily. As to quaternary structure, heterodimer of a large membrane-associated beta subunit and a small pyruvoyl-containing alpha subunit. Pyruvate is required as a cofactor. In terms of processing, is synthesized initially as an inactive proenzyme. Formation of the active enzyme involves a self-maturation process in which the active site pyruvoyl group is generated from an internal serine residue via an autocatalytic post-translational modification. Two non-identical subunits are generated from the proenzyme in this reaction, and the pyruvate is formed at the N-terminus of the alpha chain, which is derived from the carboxyl end of the proenzyme. The autoendoproteolytic cleavage occurs by a canonical serine protease mechanism, in which the side chain hydroxyl group of the serine supplies its oxygen atom to form the C-terminus of the beta chain, while the remainder of the serine residue undergoes an oxidative deamination to produce ammonia and the pyruvoyl prosthetic group on the alpha chain. During this reaction, the Ser that is part of the protease active site of the proenzyme becomes the pyruvoyl prosthetic group, which constitutes an essential element of the active site of the mature decarboxylase.

The protein resides in the mitochondrion inner membrane. The catalysed reaction is a 1,2-diacyl-sn-glycero-3-phospho-L-serine + H(+) = a 1,2-diacyl-sn-glycero-3-phosphoethanolamine + CO2. Its pathway is phospholipid metabolism; phosphatidylethanolamine biosynthesis; phosphatidylethanolamine from CDP-diacylglycerol: step 2/2. In terms of biological role, catalyzes the formation of phosphatidylethanolamine (PtdEtn) from phosphatidylserine (PtdSer). Plays a central role in phospholipid metabolism and in the interorganelle trafficking of phosphatidylserine. This Caenorhabditis elegans protein is Phosphatidylserine decarboxylase proenzyme, mitochondrial.